The chain runs to 399 residues: Probable dual-specificity RNA methyltransferase RlmN (399 aa).

Glu-102 acts as the Proton acceptor in catalysis. The 278-residue stretch at 108–385 folds into the Radical SAM core domain; the sequence is YLDRATVCVS…CTVRVERGVA (278 aa). A disulfide bridge links Cys-115 with Cys-390. Positions 122, 126, and 129 each coordinate [4Fe-4S] cluster. S-adenosyl-L-methionine contacts are provided by residues 207-208, Ser-239, 262-264, and Asn-347; these read GE and SLH. The S-methylcysteine intermediate role is filled by Cys-390.

The protein belongs to the radical SAM superfamily. RlmN family. It depends on [4Fe-4S] cluster as a cofactor.

The protein resides in the cytoplasm. The catalysed reaction is adenosine(2503) in 23S rRNA + 2 reduced [2Fe-2S]-[ferredoxin] + 2 S-adenosyl-L-methionine = 2-methyladenosine(2503) in 23S rRNA + 5'-deoxyadenosine + L-methionine + 2 oxidized [2Fe-2S]-[ferredoxin] + S-adenosyl-L-homocysteine. It catalyses the reaction adenosine(37) in tRNA + 2 reduced [2Fe-2S]-[ferredoxin] + 2 S-adenosyl-L-methionine = 2-methyladenosine(37) in tRNA + 5'-deoxyadenosine + L-methionine + 2 oxidized [2Fe-2S]-[ferredoxin] + S-adenosyl-L-homocysteine. In terms of biological role, specifically methylates position 2 of adenine 2503 in 23S rRNA and position 2 of adenine 37 in tRNAs. The polypeptide is Probable dual-specificity RNA methyltransferase RlmN (Roseiflexus castenholzii (strain DSM 13941 / HLO8)).